The primary structure comprises 1173 residues: 3-hydroxy-3-methylglutaryl coenzyme A reductase mlcD (1173 aa).

N-linked (GlcNAc...) asparagine glycans are attached at residues Asn-143 and Asn-186. In terms of domain architecture, SSD spans 241 to 420; that stretch reads DVVVMVLGYI…FTFYTAILSI (180 aa). 7 helical membrane-spanning segments follow: residues 242–262, 272–292, 302–322, 368–388, 397–417, 479–499, and 594–614; these read VVVM…LFLS, LATS…DVAI, LLSE…SITL, NIVC…VLGI, VLAA…YTAI, FWMV…TLFQ, and VLSK…SYLF. Positions 498–673 are linker; it reads FQASSSGSLS…FTPTTTDSDS (176 aa). A compositionally biased stretch (polar residues) spans 647 to 666; it reads NQTPQIQSSLQAPQTRVFTP. The disordered stretch occupies residues 647-669; that stretch reads NQTPQIQSSLQAPQTRVFTPTTT. The interval 674–1133 is catalytic; the sequence is DASLVLIKAS…LVKAHMAHNR (460 aa). Glu-822 serves as the catalytic Charge relay system. Asn-886 is a glycosylation site (N-linked (GlcNAc...) asparagine). The active-site Charge relay system is the Lys-956. N-linked (GlcNAc...) asparagine glycosylation is present at Asn-997. The active-site Charge relay system is Asp-1032. His-1128 acts as the Proton donor in catalysis. Asn-1132 carries N-linked (GlcNAc...) asparagine glycosylation. The interval 1132-1173 is disordered; that stretch reads NRSAPASSAPSRSVSPSGGTRTVPVPNNALRPSAAATDRARR. The span at 1133–1148 shows a compositional bias: low complexity; the sequence is RSAPASSAPSRSVSPS.

It belongs to the HMG-CoA reductase family.

The protein resides in the endoplasmic reticulum membrane. The enzyme catalyses (R)-mevalonate + 2 NADP(+) + CoA = (3S)-3-hydroxy-3-methylglutaryl-CoA + 2 NADPH + 2 H(+). Its pathway is polyketide biosynthesis. HMG-CoA reductase; part of the gene cluster that mediates the biosynthesis of compactin, also known as mevastatin or ML-236B, and which acts as a potent competitive inhibitor of HMG-CoA reductase. Compactin biosynthesis is performed in two stages. The first stage is catalyzed by the nonaketide synthase mlcA, which belongs to type I polyketide synthases and catalyzes the iterative nine-step formation of the polyketide. This PKS stage is completed by the action of dehydrogenase mlcG, which catalyzes the NADPH-dependent reduction of the unsaturated tetra-, penta- and heptaketide intermediates that arise during the mlcA-mediated biosynthesis of the nonaketide chain and leads to dihydro-ML-236C carboxylate. Covalently bound dihydro-ML-236C carboxylate is released from mlcA by the mlcF esterase. Conversion of dihydro-ML-236C carboxylate into ML-236A carboxylate is subsequently performed with the participation of molecular oxygen and P450 monoogygenase mlcC. Finally, mlcH performs the conversion of ML-236A carboxylate to ML-236B/compactin carboxylate through the addition of the side-chain diketide moiety produced by the diketide synthase mlcB. HMG-CoA reductase mlcD may act as a down-regulator of compactin production and is involved in conferring resistance to ML-236B/compactin. The sequence is that of 3-hydroxy-3-methylglutaryl coenzyme A reductase mlcD from Penicillium citrinum.